The following is a 1034-amino-acid chain: Beta-galactosidase (1034 aa).

Glu-481 acts as the Proton donor in catalysis. Catalysis depends on Glu-547, which acts as the Nucleophile.

This sequence belongs to the glycosyl hydrolase 2 family.

It carries out the reaction Hydrolysis of terminal non-reducing beta-D-galactose residues in beta-D-galactosides.. The chain is Beta-galactosidase (bgaM) from Priestia megaterium (strain DSM 319 / IMG 1521) (Bacillus megaterium).